We begin with the raw amino-acid sequence, 121 residues long: Large ribosomal subunit protein bL17 (121 aa).

It belongs to the bacterial ribosomal protein bL17 family. Part of the 50S ribosomal subunit. Contacts protein L32.

The polypeptide is Large ribosomal subunit protein bL17 (Sulfurihydrogenibium sp. (strain YO3AOP1)).